The following is a 98-amino-acid chain: Large ribosomal subunit protein bL27 (98 aa).

The segment covering 1 to 11 (MASKASGGSTR) has biased composition (polar residues). The segment at 1 to 20 (MASKASGGSTRNGRDSISKR) is disordered.

Belongs to the bacterial ribosomal protein bL27 family.

In Aquifex aeolicus (strain VF5), this protein is Large ribosomal subunit protein bL27.